We begin with the raw amino-acid sequence, 241 residues long: Ubiquinone biosynthesis O-methyltransferase (241 aa).

S-adenosyl-L-methionine is bound by residues R46, G66, D87, and M131.

It belongs to the methyltransferase superfamily. UbiG/COQ3 family.

The catalysed reaction is a 3-demethylubiquinol + S-adenosyl-L-methionine = a ubiquinol + S-adenosyl-L-homocysteine + H(+). The enzyme catalyses a 3-(all-trans-polyprenyl)benzene-1,2-diol + S-adenosyl-L-methionine = a 2-methoxy-6-(all-trans-polyprenyl)phenol + S-adenosyl-L-homocysteine + H(+). Its pathway is cofactor biosynthesis; ubiquinone biosynthesis. O-methyltransferase that catalyzes the 2 O-methylation steps in the ubiquinone biosynthetic pathway. The polypeptide is Ubiquinone biosynthesis O-methyltransferase (Bordetella avium (strain 197N)).